A 372-amino-acid polypeptide reads, in one-letter code: Putative glutamate--cysteine ligase 2 (372 aa).

This sequence belongs to the glutamate--cysteine ligase type 2 family. YbdK subfamily. As to quaternary structure, homodimer.

It carries out the reaction L-cysteine + L-glutamate + ATP = gamma-L-glutamyl-L-cysteine + ADP + phosphate + H(+). ATP-dependent carboxylate-amine ligase which exhibits weak glutamate--cysteine ligase activity. This Escherichia coli O157:H7 protein is Putative glutamate--cysteine ligase 2 (ybdK).